Reading from the N-terminus, the 88-residue chain is Large ribosomal subunit protein bL27 (88 aa).

Residues 1 to 21 (MAHKKGASSSRNGRDSAAQRL) form a disordered region.

This sequence belongs to the bacterial ribosomal protein bL27 family.

The chain is Large ribosomal subunit protein bL27 from Mycobacterium sp. (strain MCS).